The sequence spans 947 residues: ATPase 10, plasma membrane-type (947 aa).

The Cytoplasmic portion of the chain corresponds to Met1–Phe69. A helical transmembrane segment spans residues Leu70–Ile89. The Extracellular segment spans residues Ala90–Trp101. A helical membrane pass occupies residues Glu102–Glu122. Over Asn123–Ile251 the chain is Cytoplasmic. The chain crosses the membrane as a helical span at residues Gly252–Pro272. Residues Val273–Gly281 are Extracellular-facing. Residues Ile282–Thr299 traverse the membrane as a helical segment. Residues Val300–Arg650 are Cytoplasmic-facing. Residue Asp337 is the 4-aspartylphosphate intermediate of the active site. The Mg(2+) site is built by Asp595 and Asp599. A helical membrane pass occupies residues Asn651–Leu672. Topologically, residues Ile673 to Asp677 are extracellular. Residues Phe678–Asp700 form a helical membrane-spanning segment. Over Arg701–Ile716 the chain is Cytoplasmic. A helical membrane pass occupies residues Phe717–Ile737. Residues Ile738–Glu758 are Extracellular-facing. Residues Gln759–Thr779 traverse the membrane as a helical segment. Residues Arg780–Gly791 lie on the Cytoplasmic side of the membrane. A helical membrane pass occupies residues Thr792 to Ala812. The Extracellular portion of the chain corresponds to Asn813–Thr820. A helical membrane pass occupies residues Gly821–Leu841. The Cytoplasmic portion of the chain corresponds to Asp842 to Val947. Phosphoserine occurs at positions 897 and 929. Thr946 carries the post-translational modification Phosphothreonine.

The protein belongs to the cation transport ATPase (P-type) (TC 3.A.3) family. Type IIIA subfamily. In terms of tissue distribution, found primarily in developing seeds. Expressed in guard cells, mesophyll cells, leaves and roots.

Its subcellular location is the membrane. It catalyses the reaction ATP + H2O + H(+)(in) = ADP + phosphate + 2 H(+)(out). In terms of biological role, the plasma membrane H(+) ATPase of plants and fungi generates a proton gradient that drives the active transport of nutrients by H(+)-symport. The resulting external acidification and/or internal alkinization may mediate growth responses. This chain is ATPase 10, plasma membrane-type (AHA10), found in Arabidopsis thaliana (Mouse-ear cress).